A 143-amino-acid chain; its full sequence is MRHYEIVFMVHPDQSDQVPGMIQRYSTVITQSGGQIHRIEDWGRRQLAYAINKLHKAHYVLLNVEAPQNAINELETNFRFNDAVMRNLIKRMNHAVTEESPIIKMKDERREVVELTTSGSEDNQKDHHKEDLDKKTDEFSEEN.

Residues 100–143 (SPIIKMKDERREVVELTTSGSEDNQKDHHKEDLDKKTDEFSEEN) form a disordered region. Basic and acidic residues-rich tracts occupy residues 104–113 (KMKDERREVV) and 122–143 (DNQKDHHKEDLDKKTDEFSEEN).

This sequence belongs to the bacterial ribosomal protein bS6 family.

In terms of biological role, binds together with bS18 to 16S ribosomal RNA. This chain is Small ribosomal subunit protein bS6, found in Hamiltonella defensa subsp. Acyrthosiphon pisum (strain 5AT).